The chain runs to 498 residues: ATP synthase subunit beta, chloroplastic (498 aa).

Thr6 is subject to Phosphothreonine. Phosphoserine is present on Ser13. 172 to 179 (GGAGVGKT) serves as a coordination point for ATP.

It belongs to the ATPase alpha/beta chains family. As to quaternary structure, F-type ATPases have 2 components, CF(1) - the catalytic core - and CF(0) - the membrane proton channel. CF(1) has five subunits: alpha(3), beta(3), gamma(1), delta(1), epsilon(1). CF(0) has four main subunits: a(1), b(1), b'(1) and c(9-12).

Its subcellular location is the plastid. The protein resides in the chloroplast thylakoid membrane. The catalysed reaction is ATP + H2O + 4 H(+)(in) = ADP + phosphate + 5 H(+)(out). Produces ATP from ADP in the presence of a proton gradient across the membrane. The catalytic sites are hosted primarily by the beta subunits. The protein is ATP synthase subunit beta, chloroplastic of Nasturtium officinale (Watercress).